The chain runs to 166 residues: Interferon gamma-related (166 aa).

Positions 1-26 are cleaved as a signal peptide; the sequence is MYCRLNMVYLICALLLIVSLQGTVGA. Residue asparagine 91 is glycosylated (N-linked (GlcNAc...) asparagine).

This sequence belongs to the type II (or gamma) interferon family. In terms of assembly, homodimer. As to expression, strongly expressed in spleen. Also detected at lower levels in gill, kidney, heart, brain and intestine. In immune cell populations, expressed at highest levels in peripheral blood leukocytes and at lower levels in splenocytes, granulocytes, monocytes and macrophages.

The protein resides in the secreted. In terms of biological role, cytokine which binds to interferon gamma receptor 1 (ifngr1). Has activating effects on primary macrophages. Induces nitric oxide production and phagocytic responses in macrophages. Primes monocytes for production of reactive oxygen intermediates (ROI), although the effect is short-lived. Also has inhibitory effects on monocyte priming by ifng1 (interferon gamma 1) and tnfb (TNF-alpha 2). Stimulates phosphorylation of the JAK/STAT signal transducer stat1, but fails to induce stat1 nuclear localization. Promotes increased expression of a number of genes important for macrophage activity, including the interferon regulatory factors irf2 and irf9. In Carassius auratus (Goldfish), this protein is Interferon gamma-related.